Consider the following 443-residue polypeptide: MYGDYRQIWERIVEVIKSELTPTSYNTWLVHIKPLAFAEDTLFLSTPNTFTKNIINGRYINIIYDAASKVTNRFIEIKILSEDEEEYREIKESIERENSSESTLLSTLNPKYTFDTFVVGNSNKLAHAACLAVAQSPAKAYNPLFIYGGVGLGKTHLMHAIGHFINKNHAGYKIMYVTSETFTNELVNSIKDDKNEEFRNKYRNIDVLLIDDIQFIANKERTQEEFFHTFNTLYEANKQIVISSDRPPKEIPTLEERLRSRFEWGLIADIQPPDYETRVAILKKKAQSENLNIPDEVLAYVAEKIQSNIRELEGALIRIVAFATLTKSNIDLELTKHALKDIVSNKTREITVKLIQEEVCKYYNIKLEDFRSRKRTKNIAYPRQIAMYLARELTDLSLPKIGEEFGKDHTTVIHAYEKISNEIKQDESLARQIEELKKRIKGY.

The tract at residues 1–73 (MYGDYRQIWE…YDAASKVTNR (73 aa)) is domain I, interacts with DnaA modulators. The interval 73 to 106 (RFIEIKILSEDEEEYREIKESIERENSSESTLLS) is domain II. The domain III, AAA+ region stretch occupies residues 107–323 (TLNPKYTFDT…GALIRIVAFA (217 aa)). Glycine 151, glycine 153, lysine 154, and threonine 155 together coordinate ATP. The domain IV, binds dsDNA stretch occupies residues 324–443 (TLTKSNIDLE…EELKKRIKGY (120 aa)).

It belongs to the DnaA family. In terms of assembly, oligomerizes as a right-handed, spiral filament on DNA at oriC.

The protein localises to the cytoplasm. Functionally, plays an essential role in the initiation and regulation of chromosomal replication. ATP-DnaA binds to the origin of replication (oriC) to initiate formation of the DNA replication initiation complex once per cell cycle. Binds the DnaA box (a 9 base pair repeat at the origin) and separates the double-stranded (ds)DNA. Forms a right-handed helical filament on oriC DNA; dsDNA binds to the exterior of the filament while single-stranded (ss)DNA is stabiized in the filament's interior. The ATP-DnaA-oriC complex binds and stabilizes one strand of the AT-rich DNA unwinding element (DUE), permitting loading of DNA polymerase. After initiation quickly degrades to an ADP-DnaA complex that is not apt for DNA replication. Binds acidic phospholipids. The protein is Chromosomal replication initiator protein DnaA of Caldanaerobacter subterraneus subsp. tengcongensis (strain DSM 15242 / JCM 11007 / NBRC 100824 / MB4) (Thermoanaerobacter tengcongensis).